Here is a 515-residue protein sequence, read N- to C-terminus: Maturase K (515 aa).

The protein belongs to the intron maturase 2 family. MatK subfamily.

The protein localises to the plastid. The protein resides in the chloroplast. Functionally, usually encoded in the trnK tRNA gene intron. Probably assists in splicing its own and other chloroplast group II introns. The protein is Maturase K of Trillium luteum (Yellow wakerobin).